We begin with the raw amino-acid sequence, 392 residues long: 2'-deamino-2'-hydroxyneamine transaminase (392 aa).

K249 bears the N6-(pyridoxal phosphate)lysine mark.

Belongs to the class-III pyridoxal-phosphate-dependent aminotransferase family. The cofactor is pyridoxal 5'-phosphate.

It catalyses the reaction neamine + 2-oxoglutarate = 6'-oxoparomamine + L-glutamate. The enzyme catalyses 2'-deamino-2'-hydroxyneamine + 2-oxoglutarate = 2'-deamino-2'-hydroxy-6'-dehydroparomamine + L-glutamate. It functions in the pathway antibiotic biosynthesis; kanamycin biosynthesis. In terms of biological role, aminotransferase that has 6'-oxoglucosaminyl:L-glutamate aminotransferase activity by catalyzing pyridoxal-5'-phosphate-mediated transamination leading to the conversion of paromamine to neamine in the biosynthetic pathway of kanamycin B. This chain is 2'-deamino-2'-hydroxyneamine transaminase (kacL), found in Streptomyces kanamyceticus.